The following is a 1531-amino-acid chain: Non-structural polyprotein pORF1 (1531 aa).

In terms of domain architecture, Alphavirus-like MT spans 56–239; the sequence is RFEPRDNWAH…HKREVLQDWI (184 aa). The methyltransferase stretch occupies residues 60-239; that stretch reads RDNWAHPVQR…HKREVLQDWI (180 aa). The segment at 240–434 is Y-domain; the sequence is TTTGVSGRHP…FYRQLATWIS (195 aa). The tract at residues 435-621 is putative protease; that stretch reads GGLTIDFERR…RGQEEVLAVL (187 aa). The tract at residues 561 to 600 is disordered; that stretch reads PAVSAGPVPAPPGNPVIESVQGSGAGGPEVSESQPGLTPT. The span at 591–600 shows a compositional bias: polar residues; sequence SESQPGLTPT. Positions 612 to 761 constitute a Macro domain; sequence RGQEEVLAVL…VVQRSMAQHI (150 aa). Positions 622-786 are X-domain; it reads PSGARVIVGN…HVDRAMADMV (165 aa). In terms of domain architecture, (+)RNA virus helicase ATP-binding spans 786 to 924; that stretch reads VNYGLATEPE…DLGLQPTSWR (139 aa). Residues 803-1046 are NTPase/helicase; sequence GVEVAPMTVK…VTDAMFNNIE (244 aa). Residue 818 to 825 participates in ATP binding; sequence GVPGSGKS. In terms of domain architecture, (+)RNA virus helicase C-terminal spans 925–1058; sequence TVSHRCPWDV…LVRPDAAAPA (134 aa). The RNA-directed RNA polymerase stretch occupies residues 1049–1531; the sequence is LVRPDAAAPA…LPVLNLSKED (483 aa). The RdRp catalytic domain occupies 1295 to 1406; it reads HLVFENDFSE…VCESVRARPE (112 aa).

Belongs to the hepevirus non-structural polyprotein family. The protease domain interacts with host EIF2AK4 (via C-terminus); this interaction inhibits dimerization of EIF2AK4 and prevents EIF2AK4-mediated phosphorylation of host EIF2A. Mg(2+) serves as cofactor. Post-translationally, ORF1 polyprotein does not seem to be processed into distinct enzymatic domains by a viral protease belonging to ORF1, but could be processed by a host serine protease like thrombin.

The protein resides in the host cytoplasm. Its subcellular location is the host perinuclear region. It carries out the reaction RNA(n) + a ribonucleoside 5'-triphosphate = RNA(n+1) + diphosphate. The catalysed reaction is GTP + S-adenosyl-L-methionine = N(7)-methyl-GTP + S-adenosyl-L-homocysteine. Its function is as follows. Methyltransferase: Displays a capping enzyme activity. This function is necessary since all viral RNAs are synthesized in the cytoplasm, and host capping enzymes are restricted to the nucleus. The enzymatic reaction involves a covalent link between 7-methyl-GMP and the methyltransferase, whereas eukaryotic capping enzymes form a covalent complex only with GMP. Methyltransferase catalyzes transfer of a methyl group from S-adenosylmethionine to GTP and GDP to yield m(7)GTP or m(7)GDP. This enzyme also displays guanylyltransferase activity to form a covalent complex, methyltransferase-m(7)GMP, from which 7-methyl-GMP is transferred to the mRNA to create the cap structure. In terms of biological role, Y-domain: Indispensable for virus replication. Putative protease: The putative protease domain although necessary for replication of the virus may not be a protease but rather a structural Zn(2+)-binding domain. Inhibits induction of IFN-beta by MDA5 and RIG-I pathways and down-regulates the expression of MDA5. Functionally, NTPase/helicase: Multi-functional protein that exhibits NTPase and RNA unwinding activities. Hydrolyzes all NTPs efficiently and unwinds RNA duplexes containing 5' overhangs. Possesses a sequence independent RNA-5'-triphosphatase (RTPase) activity suggestive of its role in forming viral cap structure. Also participates in viral genome replication, RNA translocation and genome packaging/unpackaging. Its function is as follows. RNA-directed RNA polymerase: Plays an essential role in the virus replication. Binds to the 3'-end of the genomic RNA to initiate viral replication. This Gallus gallus (Chicken) protein is Non-structural polyprotein pORF1.